Reading from the N-terminus, the 1115-residue chain is Carbamoyl phosphate synthase large chain (1115 aa).

The tract at residues 1-407 (MPRRTDLHHV…ALGKVMRSLE (407 aa)) is carboxyphosphate synthetic domain. Residues Arg134, Arg174, Gly180, Gly181, Glu213, Ile215, Glu220, Gly246, Val247, His248, Gln290, and Glu304 each coordinate ATP. Residues 138-333 (KDIVAKAGGE…IAKIAAKLAI (196 aa)) enclose the ATP-grasp 1 domain. Residues Gln290, Glu304, and Asn306 each contribute to the Mg(2+) site. Residues Gln290, Glu304, and Asn306 each contribute to the Mn(2+) site. The tract at residues 408-559 (TTRAGFWTAP…ELDPAAETEV (152 aa)) is oligomerization domain. The carbamoyl phosphate synthetic domain stretch occupies residues 560-965 (APQTERPKVL…AFAKSQTAAY (406 aa)). The ATP-grasp 2 domain maps to 693–884 (GDLLSAAGLP…LAKACARIML (192 aa)). The ATP site is built by Arg729, Arg768, Leu770, Glu775, Gly800, Ile801, His802, Ser803, Gln843, and Glu855. 3 residues coordinate Mg(2+): Gln843, Glu855, and Asn857. Mn(2+) contacts are provided by Gln843, Glu855, and Asn857. Residues 966 to 1113 (GSLPAQGTVF…QELHRVIGGV (148 aa)) enclose the MGS-like domain. The tract at residues 966-1115 (GSLPAQGTVF…LHRVIGGVER (150 aa)) is allosteric domain.

Belongs to the CarB family. Composed of two chains; the small (or glutamine) chain promotes the hydrolysis of glutamine to ammonia, which is used by the large (or ammonia) chain to synthesize carbamoyl phosphate. Tetramer of heterodimers (alpha,beta)4. Requires Mg(2+) as cofactor. Mn(2+) serves as cofactor.

It carries out the reaction hydrogencarbonate + L-glutamine + 2 ATP + H2O = carbamoyl phosphate + L-glutamate + 2 ADP + phosphate + 2 H(+). The catalysed reaction is hydrogencarbonate + NH4(+) + 2 ATP = carbamoyl phosphate + 2 ADP + phosphate + 2 H(+). It participates in amino-acid biosynthesis; L-arginine biosynthesis; carbamoyl phosphate from bicarbonate: step 1/1. It functions in the pathway pyrimidine metabolism; UMP biosynthesis via de novo pathway; (S)-dihydroorotate from bicarbonate: step 1/3. In terms of biological role, large subunit of the glutamine-dependent carbamoyl phosphate synthetase (CPSase). CPSase catalyzes the formation of carbamoyl phosphate from the ammonia moiety of glutamine, carbonate, and phosphate donated by ATP, constituting the first step of 2 biosynthetic pathways, one leading to arginine and/or urea and the other to pyrimidine nucleotides. The large subunit (synthetase) binds the substrates ammonia (free or transferred from glutamine from the small subunit), hydrogencarbonate and ATP and carries out an ATP-coupled ligase reaction, activating hydrogencarbonate by forming carboxy phosphate which reacts with ammonia to form carbamoyl phosphate. This Mycobacterium tuberculosis (strain CDC 1551 / Oshkosh) protein is Carbamoyl phosphate synthase large chain.